We begin with the raw amino-acid sequence, 290 residues long: Small ribosomal subunit protein uS2 (290 aa).

The disordered stretch occupies residues 269–290 (WEAEASGDWAAESAQPNPETKW).

It belongs to the universal ribosomal protein uS2 family. Component of the small ribosomal subunit. Mature ribosomes consist of a small (40S) and a large (60S) subunit. The 40S subunit contains about 33 different proteins and 1 molecule of RNA (18S). The 60S subunit contains about 49 different proteins and 3 molecules of RNA (25S, 5.8S and 5S). Interacts with rps21.

It localises to the cytoplasm. Its function is as follows. Required for the assembly and/or stability of the 40S ribosomal subunit. Required for the processing of the 20S rRNA-precursor to mature 18S rRNA in a late step of the maturation of 40S ribosomal subunits. This Talaromyces marneffei (strain ATCC 18224 / CBS 334.59 / QM 7333) (Penicillium marneffei) protein is Small ribosomal subunit protein uS2 (rps0).